Consider the following 258-residue polypeptide: Acyl-[acyl-carrier-protein]--UDP-N-acetylglucosamine O-acyltransferase (258 aa).

This sequence belongs to the transferase hexapeptide repeat family. LpxA subfamily. As to quaternary structure, homotrimer.

It is found in the cytoplasm. The catalysed reaction is a (3R)-hydroxyacyl-[ACP] + UDP-N-acetyl-alpha-D-glucosamine = a UDP-3-O-[(3R)-3-hydroxyacyl]-N-acetyl-alpha-D-glucosamine + holo-[ACP]. Its pathway is glycolipid biosynthesis; lipid IV(A) biosynthesis; lipid IV(A) from (3R)-3-hydroxytetradecanoyl-[acyl-carrier-protein] and UDP-N-acetyl-alpha-D-glucosamine: step 1/6. Its function is as follows. Involved in the biosynthesis of lipid A, a phosphorylated glycolipid that anchors the lipopolysaccharide to the outer membrane of the cell. The polypeptide is Acyl-[acyl-carrier-protein]--UDP-N-acetylglucosamine O-acyltransferase (Azotobacter vinelandii (strain DJ / ATCC BAA-1303)).